The following is a 1276-amino-acid chain: Receptor-type guanylate cyclase gcy-28 (1276 aa).

The first 18 residues, 1–18 (MLRWLTLLSCILLTALHG), serve as a signal peptide directing secretion. Over 19-515 (NIVEDVGAAQ…KSKCPGYPLH (497 aa)) the chain is Extracellular. Residues N87, N196, N338, N384, N387, N414, N428, and N444 are each glycosylated (N-linked (GlcNAc...) asparagine). The helical transmembrane segment at 516–536 (VYLLMGSFLLILVLVGLFIFF) threads the bilayer. Residues 537–1276 (WRRYKLEQEL…EIPDFGEEFA (740 aa)) are Cytoplasmic-facing. Disordered stretches follow at residues 562–601 (ESQK…NSDK) and 635–709 (IFTR…KKSL). Over residues 567-577 (NEKKKAKKRKN) the composition is skewed to basic residues. Composition is skewed to polar residues over residues 590-599 (RSTSRSSVNS) and 642-660 (TPPS…SLQK). A Protein kinase domain is found at 717 to 1013 (SFGMVSFKSG…SSVRKAVRSL (297 aa)). Residues 723–731 (FKSGSGGSV) and K756 contribute to the ATP site. Residues 1017–1063 (NETSNLVDNLLKRMEQYANNLEGLVEERTQEYLAEKKKVEELLHQLL) adopt a coiled-coil conformation. Positions 1086-1215 (TIYFSDIVGF…DTVNTSSRME (130 aa)) constitute a Guanylate cyclase domain. Residues D1091, I1092, and D1135 each coordinate Mg(2+).

It belongs to the adenylyl cyclase class-4/guanylyl cyclase family. In terms of tissue distribution, expressed in head neurons, ventral cord and tail neurons, body wall muscle, hypodermis, somatic gonad and intestine. Isoform d is expressed specifically in AIA interneurons.

The protein resides in the cell membrane. It localises to the cell projection. The protein localises to the dendrite. It is found in the axon. Its subcellular location is the perikaryon. The enzyme catalyses GTP = 3',5'-cyclic GMP + diphosphate. In terms of biological role, guanylate cyclase involved in the production of the second messenger cGMP. Regulates olfactory perception in AWC sensory neurons although may not be involved in the primary sensory transduction steps. Functionally, isoforms c: Regulates sensory integration of conflicting sensory cues in AIA interneurons. Regulates sensory integration of conflicting sensory cues in AIA interneurons. The polypeptide is Receptor-type guanylate cyclase gcy-28 (Caenorhabditis elegans).